The chain runs to 113 residues: Large ribosomal subunit protein uL22 (113 aa).

Belongs to the universal ribosomal protein uL22 family. In terms of assembly, part of the 50S ribosomal subunit.

Its function is as follows. This protein binds specifically to 23S rRNA; its binding is stimulated by other ribosomal proteins, e.g. L4, L17, and L20. It is important during the early stages of 50S assembly. It makes multiple contacts with different domains of the 23S rRNA in the assembled 50S subunit and ribosome. In terms of biological role, the globular domain of the protein is located near the polypeptide exit tunnel on the outside of the subunit, while an extended beta-hairpin is found that lines the wall of the exit tunnel in the center of the 70S ribosome. The sequence is that of Large ribosomal subunit protein uL22 from Desulforamulus reducens (strain ATCC BAA-1160 / DSM 100696 / MI-1) (Desulfotomaculum reducens).